The chain runs to 338 residues: Holliday junction branch migration complex subunit RuvB (338 aa).

The segment at 1 to 181 (MDRIVEIEKV…FGMDFRLQFY (181 aa)) is large ATPase domain (RuvB-L). ATP-binding positions include Leu20, Arg21, Gly62, Lys65, Thr66, Thr67, 128-130 (EDF), Arg171, Tyr181, and Arg218. Mg(2+) is bound at residue Thr66. Residues 182–252 (STAELSRIIQ…RAKEGLNALG (71 aa)) are small ATPAse domain (RuvB-S). The interval 255–338 (SLGFDEMDIK…NRTKGLFDGE (84 aa)) is head domain (RuvB-H). 2 residues coordinate DNA: Arg309 and Arg314.

This sequence belongs to the RuvB family. Homohexamer. Forms an RuvA(8)-RuvB(12)-Holliday junction (HJ) complex. HJ DNA is sandwiched between 2 RuvA tetramers; dsDNA enters through RuvA and exits via RuvB. An RuvB hexamer assembles on each DNA strand where it exits the tetramer. Each RuvB hexamer is contacted by two RuvA subunits (via domain III) on 2 adjacent RuvB subunits; this complex drives branch migration. In the full resolvosome a probable DNA-RuvA(4)-RuvB(12)-RuvC(2) complex forms which resolves the HJ.

Its subcellular location is the cytoplasm. The enzyme catalyses ATP + H2O = ADP + phosphate + H(+). In terms of biological role, the RuvA-RuvB-RuvC complex processes Holliday junction (HJ) DNA during genetic recombination and DNA repair, while the RuvA-RuvB complex plays an important role in the rescue of blocked DNA replication forks via replication fork reversal (RFR). RuvA specifically binds to HJ cruciform DNA, conferring on it an open structure. The RuvB hexamer acts as an ATP-dependent pump, pulling dsDNA into and through the RuvAB complex. RuvB forms 2 homohexamers on either side of HJ DNA bound by 1 or 2 RuvA tetramers; 4 subunits per hexamer contact DNA at a time. Coordinated motions by a converter formed by DNA-disengaged RuvB subunits stimulates ATP hydrolysis and nucleotide exchange. Immobilization of the converter enables RuvB to convert the ATP-contained energy into a lever motion, pulling 2 nucleotides of DNA out of the RuvA tetramer per ATP hydrolyzed, thus driving DNA branch migration. The RuvB motors rotate together with the DNA substrate, which together with the progressing nucleotide cycle form the mechanistic basis for DNA recombination by continuous HJ branch migration. Branch migration allows RuvC to scan DNA until it finds its consensus sequence, where it cleaves and resolves cruciform DNA. The polypeptide is Holliday junction branch migration complex subunit RuvB (Campylobacter curvus (strain 525.92)).